The primary structure comprises 175 residues: Ferritin light chain (175 aa).

The residue at position 2 (Ser2) is an N-acetylserine. In terms of domain architecture, Ferritin-like diiron spans 7–156 (QNYSTEVEAA…DHLTNLRRLA (150 aa)). Residues Glu54, Glu57, Glu58, Glu61, and Glu64 each contribute to the Fe cation site.

Belongs to the ferritin family. Oligomer of 24 subunits. There are two types of subunits: L (light) chain and H (heavy) chain. The major chain can be light or heavy, depending on the species and tissue type. The functional molecule forms a roughly spherical shell with a diameter of 12 nm and contains a central cavity into which the insoluble mineral iron core is deposited. Interacts with NCOA4.

It is found in the cytoplasmic vesicle. The protein resides in the autophagosome. It localises to the cytoplasm. The protein localises to the autolysosome. In terms of biological role, stores iron in a soluble, non-toxic, readily available form. Important for iron homeostasis. Iron is taken up in the ferrous form and deposited as ferric hydroxides after oxidation. Also plays a role in delivery of iron to cells. Mediates iron uptake in capsule cells of the developing kidney. Delivery to lysosomes by the cargo receptor NCOA4 for autophagic degradation and release or iron. The protein is Ferritin light chain (FTL) of Canis lupus familiaris (Dog).